A 267-amino-acid chain; its full sequence is PHD finger protein ALFIN-LIKE 7 (267 aa).

The segment at Thr162–Asp207 is disordered. Low complexity predominate over residues Ser165–Pro188. The segment covering Asp196–Asp207 has biased composition (acidic residues). The segment at Ala211 to Lys263 adopts a PHD-type zinc-finger fold.

The protein belongs to the Alfin family. In terms of assembly, interacts with H3K4me3 and to a lesser extent with H3K4me2.

It localises to the nucleus. Functionally, histone-binding component that specifically recognizes H3 tails trimethylated on 'Lys-4' (H3K4me3), which mark transcription start sites of virtually all active genes. This Oryza sativa subsp. indica (Rice) protein is PHD finger protein ALFIN-LIKE 7.